Here is a 73-residue protein sequence, read N- to C-terminus: Large ribosomal subunit protein bL31 (73 aa).

Residues cysteine 16, cysteine 18, cysteine 36, and cysteine 39 each coordinate Zn(2+).

Belongs to the bacterial ribosomal protein bL31 family. Type A subfamily. As to quaternary structure, part of the 50S ribosomal subunit. Zn(2+) serves as cofactor.

In terms of biological role, binds the 23S rRNA. The sequence is that of Large ribosomal subunit protein bL31 from Citrifermentans bemidjiense (strain ATCC BAA-1014 / DSM 16622 / JCM 12645 / Bem) (Geobacter bemidjiensis).